A 317-amino-acid polypeptide reads, in one-letter code: Apolipoprotein E (317 aa).

The signal sequence occupies residues 1–18 (MKVLWAALLVTFLAGCQA). 8 repeat units span residues 80 to 101 (TLMDETMKELKAYKSELEEQLS), 102 to 123 (PVAEETRARLSKELQAAQARLG), 124 to 145 (ADMEDVRSRLVQYRSEVQAMLG), 146 to 167 (QSTEELRARLASHLRKLRKRLL), 168 to 189 (RDADDLQKRLAVYQAGAREGAE), 190 to 211 (RGVSAIRERLGPLVEQGRVRAA), 212 to 233 (TVGSLASQPLQERAQALGERLR), and 234 to 255 (ARMEEMGSRTRDRLDEVKEQVA). The tract at residues 80–255 (TLMDETMKEL…RLDEVKEQVA (176 aa)) is 8 X 22 AA approximate tandem repeats. A Methionine sulfoxide modification is found at Met-143. At Ser-147 the chain carries Phosphoserine. An LDL and other lipoprotein receptors binding region spans residues 158–168 (HLRKLRKRLLR). 162–165 (LRKR) lines the heparin pocket. Positions 210 to 290 (AATVGSLASQ…SWFEPLVEDM (81 aa)) are lipid-binding and lipoprotein association. 229-236 (GERLRARM) lines the heparin pocket. A homooligomerization region spans residues 266-317 (QQISLQAEAFQARLKSWFEPLVEDMQRQWAGLVEKVQAAVGASTAPVPSDNH). The tract at residues 278–290 (RLKSWFEPLVEDM) is specificity for association with VLDL.

This sequence belongs to the apolipoprotein A1/A4/E family. In terms of assembly, homotetramer. May interact with ABCA1; functionally associated with ABCA1 in the biogenesis of HDLs. May interact with APP/A4 amyloid-beta peptide; the interaction is extremely stable in vitro but its physiological significance is unclear. May interact with MAPT. May interact with MAP2. In the cerebrospinal fluid, interacts with secreted SORL1. Interacts with PMEL; this allows the loading of PMEL luminal fragment on ILVs to induce fibril nucleation. Post-translationally, APOE exists as multiple glycosylated and sialylated glycoforms within cells and in plasma. The extent of glycosylation and sialylation are tissue and context specific. In terms of processing, glycated in plasma VLDL. Phosphorylated by FAM20C in the extracellular medium.

Its subcellular location is the secreted. It is found in the extracellular space. The protein localises to the extracellular matrix. The protein resides in the extracellular vesicle. It localises to the endosome. Its subcellular location is the multivesicular body. Its function is as follows. APOE is an apolipoprotein, a protein associating with lipid particles, that mainly functions in lipoprotein-mediated lipid transport between organs via the plasma and interstitial fluids. APOE is a core component of plasma lipoproteins and is involved in their production, conversion and clearance. Apolipoproteins are amphipathic molecules that interact both with lipids of the lipoprotein particle core and the aqueous environment of the plasma. As such, APOE associates with chylomicrons, chylomicron remnants, very low density lipoproteins (VLDL) and intermediate density lipoproteins (IDL) but shows a preferential binding to high-density lipoproteins (HDL). It also binds a wide range of cellular receptors including the LDL receptor/LDLR, the LDL receptor-related proteins LRP1, LRP2 and LRP8 and the very low-density lipoprotein receptor/VLDLR that mediate the cellular uptake of the APOE-containing lipoprotein particles. Finally, APOE also has a heparin-binding activity and binds heparan-sulfate proteoglycans on the surface of cells, a property that supports the capture and the receptor-mediated uptake of APOE-containing lipoproteins by cells. A main function of APOE is to mediate lipoprotein clearance through the uptake of chylomicrons, VLDLs, and HDLs by hepatocytes. APOE is also involved in the biosynthesis by the liver of VLDLs as well as their uptake by peripheral tissues ensuring the delivery of triglycerides and energy storage in muscle, heart and adipose tissues. By participating in the lipoprotein-mediated distribution of lipids among tissues, APOE plays a critical role in plasma and tissues lipid homeostasis. APOE is also involved in two steps of reverse cholesterol transport, the HDLs-mediated transport of cholesterol from peripheral tissues to the liver, and thereby plays an important role in cholesterol homeostasis. First, it is functionally associated with ABCA1 in the biogenesis of HDLs in tissues. Second, it is enriched in circulating HDLs and mediates their uptake by hepatocytes. APOE also plays an important role in lipid transport in the central nervous system, regulating neuron survival and sprouting. The protein is Apolipoprotein E (APOE) of Papio anubis (Olive baboon).